The chain runs to 485 residues: Probable L-xylulose kinase (485 aa).

Belongs to the FGGY kinase family. Homodimer.

The enzyme catalyses L-xylulose + ATP = L-xylulose 5-phosphate + ADP + H(+). This chain is Probable L-xylulose kinase (lyx), found in Haemophilus influenzae (strain ATCC 51907 / DSM 11121 / KW20 / Rd).